The following is a 295-amino-acid chain: Acetylglutamate kinase (295 aa).

Residues 66-67 (GG), R88, and N193 each bind substrate.

Belongs to the acetylglutamate kinase family. ArgB subfamily.

The protein resides in the cytoplasm. It catalyses the reaction N-acetyl-L-glutamate + ATP = N-acetyl-L-glutamyl 5-phosphate + ADP. Its pathway is amino-acid biosynthesis; L-arginine biosynthesis; N(2)-acetyl-L-ornithine from L-glutamate: step 2/4. In terms of biological role, catalyzes the ATP-dependent phosphorylation of N-acetyl-L-glutamate. The sequence is that of Acetylglutamate kinase from Rhizobium etli (strain ATCC 51251 / DSM 11541 / JCM 21823 / NBRC 15573 / CFN 42).